Reading from the N-terminus, the 338-residue chain is DNA-directed RNA polymerase subunit alpha (338 aa).

The tract at residues 1-233 (MLREEVAVST…DLFIPFLHAE (233 aa)) is alpha N-terminal domain (alpha-NTD). The tract at residues 266–338 (IALKFIFIDQ…IDLPKNKFSN (73 aa)) is alpha C-terminal domain (alpha-CTD).

The protein belongs to the RNA polymerase alpha chain family. In terms of assembly, in plastids the minimal PEP RNA polymerase catalytic core is composed of four subunits: alpha, beta, beta', and beta''. When a (nuclear-encoded) sigma factor is associated with the core the holoenzyme is formed, which can initiate transcription.

The protein resides in the plastid. It is found in the chloroplast. It catalyses the reaction RNA(n) + a ribonucleoside 5'-triphosphate = RNA(n+1) + diphosphate. DNA-dependent RNA polymerase catalyzes the transcription of DNA into RNA using the four ribonucleoside triphosphates as substrates. This chain is DNA-directed RNA polymerase subunit alpha, found in Nandina domestica (Heavenly bamboo).